We begin with the raw amino-acid sequence, 387 residues long: Hydroxycarboxylic acid receptor 3 (387 aa).

The Extracellular segment spans residues M1–K28. Residues V29–W50 traverse the membrane as a helical segment. Residues I51–R63 are Cytoplasmic-facing. The chain crosses the membrane as a helical span at residues I64 to D85. The Extracellular segment spans residues Y86–L102. A disulfide bridge connects residues C100 and C177. Residues V103–V123 traverse the membrane as a helical segment. Residues D124–W142 are Cytoplasmic-facing. The chain crosses the membrane as a helical span at residues T143–L163. Over K164–L194 the chain is Extracellular. A helical membrane pass occupies residues L195–A209. At R210–V236 the chain is on the cytoplasmic side. A helical transmembrane segment spans residues A237–W256. Topologically, residues L257 to D273 are extracellular. A helical transmembrane segment spans residues L274–S298. Topologically, residues P299–E387 are cytoplasmic. A disordered region spans residues G319 to E343.

This sequence belongs to the G-protein coupled receptor 1 family. Expression largely restricted to adipose tissue and spleen.

It is found in the cell membrane. Its function is as follows. Receptor for 3-OH-octanoid acid mediates a negative feedback regulation of adipocyte lipolysis to counteract prolipolytic influences under conditions of physiological or pathological increases in beta-oxidation rates. Acts as a low affinity receptor for nicotinic acid. This pharmacological effect requires nicotinic acid doses that are much higher than those provided by a normal diet. The protein is Hydroxycarboxylic acid receptor 3 (HCAR3) of Homo sapiens (Human).